The following is a 501-amino-acid chain: Solute carrier family 2, facilitated glucose transporter member 5 (501 aa).

Methionine 1 carries the N-acetylmethionine modification. Topologically, residues 1–18 (MEQQDPIKKEGRLTPVLA) are cytoplasmic. Residues 19–39 (LATLIAAFGSSFQYGYNVAAV) form a helical membrane-spanning segment. Tyrosine 32 serves as a coordination point for D-fructose. Over 40-68 (NSPAELMKAFYNETHYSRFSEYISEFSLT) the chain is Extracellular. Asparagine 51 carries an N-linked (GlcNAc...) asparagine glycan. Residues 69-91 (LLWSISVSMFPFGGFVGSLMVGP) form a helical membrane-spanning segment. At 92 to 98 (LVNRLGR) the chain is on the cytoplasmic side. Residues 99-119 (KGTLLFNNIFSIVPAILMGTS) form a helical membrane-spanning segment. Residues 120–126 (KTARSYE) lie on the Extracellular side of the membrane. A helical transmembrane segment spans residues 127–149 (MIILSRLLVGICAGLSSNVVPMY). Residues 150 to 161 (LGELSPKNLRGA) lie on the Cytoplasmic side of the membrane. The chain crosses the membrane as a helical span at residues 162-182 (LGVVPQLFITVGILVAQIVGL). Glutamine 167 is a D-fructose binding site. Topologically, residues 183–192 (RSLLATEEGW) are extracellular. Residues 193–213 (PILLGLTAIPAALQLLLLPFF) form a helical membrane-spanning segment. The Cytoplasmic segment spans residues 214 to 277 (PESPRYLLIQ…MFRMRSLRWQ (64 aa)). The helical transmembrane segment at 278–298 (VISIIILMGGQQLSGVNAIYY) threads the bilayer. D-fructose contacts are provided by residues glutamine 288 and 296–298 (IYY). The Extracellular segment spans residues 299–313 (YADQIYLSAGVKDQD). The chain crosses the membrane as a helical span at residues 314 to 334 (VQYVTVGTGAVNVLMTICAVF). The Cytoplasmic segment spans residues 335–342 (VVEYLGRR). Residues 343–363 (ALLLLGFSVCFIACCVLTVAL) traverse the membrane as a helical segment. At 364 to 371 (ALQDRVSW) the chain is on the extracellular side. Residues 372–394 (MPYISIVCVISYVIGHALGPSPI) form a helical membrane-spanning segment. Histidine 387 lines the D-fructose pocket. At 395 to 412 (PALLITEVFLQSSRSAAY) the chain is on the cytoplasmic side. Residues 413-433 (MVGGTVHWLSNFAVGLVFPFI) form a helical membrane-spanning segment. 419–420 (HW) is a D-fructose binding site. The Extracellular portion of the chain corresponds to 434–439 (QVGLGA). A helical transmembrane segment spans residues 440–460 (YSFIIFAVICLLTTIYIFLIV). The Cytoplasmic segment spans residues 461–501 (PETKGKTFVEINHIFTKMNKVSDVHPAKDELKDIPLSAVEL).

Belongs to the major facilitator superfamily. Sugar transporter (TC 2.A.1.1) family. Glucose transporter subfamily.

The protein resides in the apical cell membrane. It is found in the cell membrane. Its subcellular location is the sarcolemma. It carries out the reaction D-fructose(out) = D-fructose(in). Its function is as follows. Functions as a fructose transporter that has only low activity with other monosaccharides. Can mediate the uptake of deoxyglucose, but with low efficiency. Essential for fructose uptake in the small intestine. Plays a role in the regulation of salt uptake and blood pressure in response to dietary fructose. Required for the development of high blood pressure in response to high dietary fructose intake. The sequence is that of Solute carrier family 2, facilitated glucose transporter member 5 from Equus caballus (Horse).